The primary structure comprises 175 residues: Acetyl-CoA decarbonylase/synthase complex subunit epsilon 2 (175 aa).

The protein belongs to the CdhB family. As to quaternary structure, heterotetramer of two alpha and two epsilon subunits. The ACDS complex is made up of alpha, epsilon, beta, gamma and delta subunits with a probable stoichiometry of (alpha(2)epsilon(2))(4)-beta(8)-(gamma(1)delta(1))(8).

Its function is as follows. Part of a complex that catalyzes the reversible cleavage of acetyl-CoA, allowing autotrophic growth from CO(2). The alpha-epsilon subcomponent functions as a carbon monoxide dehydrogenase. The precise role of the epsilon subunit is unclear; it may have a stabilizing role within the alpha(2)epsilon(2) component and/or be involved in electron transfer to FAD during a potential FAD-mediated CO oxidation. The sequence is that of Acetyl-CoA decarbonylase/synthase complex subunit epsilon 2 (cdhB2) from Archaeoglobus fulgidus (strain ATCC 49558 / DSM 4304 / JCM 9628 / NBRC 100126 / VC-16).